The sequence spans 362 residues: Caspase activity and apoptosis inhibitor 1 (362 aa).

Basic residues predominate over residues 1–14 (MTGKKSSREKRRKR). Disordered regions lie at residues 1 to 44 (MTGK…SGCG) and 65 to 101 (TGGGSGGSCWGGSSVERGERRKRRSTDSSSSVSGSLQ). Over residues 19–32 (AAAALAAPDLVPAV) the composition is skewed to low complexity. Composition is skewed to gly residues over residues 33–44 (GGSGSGSTSGCG) and 65–74 (TGGGSGGSCW). Ser89 is modified (phosphoserine). Phosphothreonine is present on Thr90. A Glycyl lysine isopeptide (Lys-Gly) (interchain with G-Cter in SUMO2) cross-link involves residue Lys105. Residues Ser121 and Ser204 each carry the phosphoserine modification. Disordered regions lie at residues 226-251 (SCVDSTSSLRENKQPEGLELKQGKGE), 269-291 (GPCNEEAAAPEVPENTVQSEAGQ), and 309-332 (LAESSPKEPKAATLTVPPPEDVQP). Basic and acidic residues predominate over residues 235–251 (RENKQPEGLELKQGKGE). Low complexity predominate over residues 273–282 (EEAAAPEVPE). Positions 282–312 (ENTVQSEAGQIDDLEKDIEKSVNEILGLAES) form a coiled coil. Ser313 is modified (phosphoserine).

In terms of biological role, anti-apoptotic protein that modulates a caspase-10 dependent mitochondrial caspase-3/9 feedback amplification loop. The chain is Caspase activity and apoptosis inhibitor 1 (CAAP1) from Bos taurus (Bovine).